The chain runs to 199 residues: N-(5'-phosphoribosyl)anthranilate isomerase (199 aa).

It belongs to the TrpF family.

The catalysed reaction is N-(5-phospho-beta-D-ribosyl)anthranilate = 1-(2-carboxyphenylamino)-1-deoxy-D-ribulose 5-phosphate. Its pathway is amino-acid biosynthesis; L-tryptophan biosynthesis; L-tryptophan from chorismate: step 3/5. The chain is N-(5'-phosphoribosyl)anthranilate isomerase from Solibacter usitatus (strain Ellin6076).